The sequence spans 239 residues: Proteasome activator complex subunit 2 (239 aa).

At alanine 2 the chain carries N-acetylalanine. Serine 10 is subject to Phosphoserine. Residues 65-86 form a disordered region; the sequence is DIPIPDPPPKDDEMETDKQEKK. Residues 72–86 show a composition bias toward basic and acidic residues; it reads PPKDDEMETDKQEKK.

It belongs to the PA28 family. In terms of assembly, heterodimer of PSME1 and PSME2, which forms a hexameric ring.

In terms of biological role, implicated in immunoproteasome assembly and required for efficient antigen processing. The PA28 activator complex enhances the generation of class I binding peptides by altering the cleavage pattern of the proteasome. This Sus scrofa (Pig) protein is Proteasome activator complex subunit 2 (PSME2).